Here is a 35-residue protein sequence, read N- to C-terminus: U5-ctenitoxin-Co1a (35 aa).

Intrachain disulfides connect cysteine 4-cysteine 18, cysteine 11-cysteine 24, cysteine 17-cysteine 32, and cysteine 26-cysteine 30.

As to expression, expressed by the venom gland.

It is found in the secreted. Blocks voltage-gated sodium channels (Nav). In Ctenus ornatus (Brazilian spider), this protein is U5-ctenitoxin-Co1a.